Reading from the N-terminus, the 166-residue chain is Large ribosomal subunit protein uL10 (166 aa).

Belongs to the universal ribosomal protein uL10 family. In terms of assembly, part of the ribosomal stalk of the 50S ribosomal subunit. The N-terminus interacts with L11 and the large rRNA to form the base of the stalk. The C-terminus forms an elongated spine to which L12 dimers bind in a sequential fashion forming a multimeric L10(L12)X complex.

Functionally, forms part of the ribosomal stalk, playing a central role in the interaction of the ribosome with GTP-bound translation factors. The chain is Large ribosomal subunit protein uL10 from Flavobacterium psychrophilum (strain ATCC 49511 / DSM 21280 / CIP 103535 / JIP02/86).